The following is a 239-amino-acid chain: IkB-like protein (239 aa).

ANK repeat units lie at residues 48–80 (SKIT…EIIS), 87–118 (DGNS…GIKV), 124–153 (NGIT…NPNQ), and 158–187 (KGFN…KPLF). Positions 81 to 87 (HYRRDKD) match the Nuclear localization signal motif. Residues 203–214 (KKKPKIIITSCE) carry the Nuclear localization signal motif. The PxIxITxC motif; Interaction with host PPP3CA motif lies at 206–213 (PKIIITSC). The short motif at 228–231 (FLCV) is the FLCV motif element.

This sequence belongs to the asfivirus A238L family. As to quaternary structure, interacts with host PPIA. Interacts with host PPP3CA/Calcineurin. Interacts with host RELA/p65; interaction of the 32 kDa form with host RELA results in the formation of a stable complex with NF-kappa-B. Interacts with host PPP3R1. Interacts with host EP300; this interaction inhibits the association of host EP300 with host RELA, JUN and NFATC2. Post-translationally, the protein exists in a 28 kDa and a 32 kDa form, probably due to post-translational modifications which are neither phosphorylation, nor sumoylation.

The protein localises to the host nucleus. Its subcellular location is the host cytoplasm. IkB-like protein that inhibits the binding of NF-kappa-B to DNA, thereby downregulating pro-inflammatory cytokine production. Forms a heterodimer with the NF-kappa-B subunit RELA/p65 and prevents the activation of the NF-kappa-B transcription factor. Inhibits calcineurin function, which is required for the induction of nuclear factor of activated T cells (NFAT)-dependent immune response genes. Prevents the binding of substrates to calcineurin without affecting the phosphatase activity. Does not contain the serine residues that are phosphorylated by host IkB kinase and thus is not degraded following stimulation of the NFkB pathway. This is IkB-like protein (A238L) from Ornithodoros (relapsing fever ticks).